The sequence spans 262 residues: Flap endonuclease Xni (262 aa).

Asp109 provides a ligand contact to Mg(2+). One can recognise a 5'-3' exonuclease domain in the interval 165–255 (LKPEQLADYW…FNLQDIRYEK (91 aa)). 4 residues coordinate K(+): Leu176, Ala177, Ile187, and Val190. Residues 189-194 (GVGPKA) are interaction with DNA.

It belongs to the Xni family. It depends on Mg(2+) as a cofactor. K(+) serves as cofactor.

In terms of biological role, has flap endonuclease activity. During DNA replication, flap endonucleases cleave the 5'-overhanging flap structure that is generated by displacement synthesis when DNA polymerase encounters the 5'-end of a downstream Okazaki fragment. The sequence is that of Flap endonuclease Xni from Aliivibrio fischeri (strain MJ11) (Vibrio fischeri).